The primary structure comprises 63 residues: Large ribosomal subunit protein uL29 (63 aa).

The protein belongs to the universal ribosomal protein uL29 family.

This chain is Large ribosomal subunit protein uL29, found in Pectobacterium carotovorum subsp. carotovorum (strain PC1).